Reading from the N-terminus, the 114-residue chain is uncharacterized protein (114 aa).

Residues 13-30 traverse the membrane as a helical segment; that stretch reads LYISAAGIASIYVVKTIV.

Its subcellular location is the mitochondrion outer membrane. This is an uncharacterized protein from Saccharomyces cerevisiae (strain ATCC 204508 / S288c) (Baker's yeast).